The sequence spans 113 residues: Insulin-like peptide 02 (113 aa).

The signal sequence occupies residues 1 to 22 (MFYLTFLLFGAICIGQIQLGQP). The propeptide occupies 23–42 (VKFKVNEDGHRPSVYPIKYR). 3 cysteine pairs are disulfide-bonded: Cys44–Cys99, Cys56–Cys112, and Cys98–Cys103. A propeptide spans 62 to 87 (RRKRSIEADIITDKDTANSYFNRVKR) (c peptide).

It belongs to the insulin family.

Its subcellular location is the secreted. In terms of biological role, insulin decreases blood glucose concentration. May have evolved to activate insulin receptors (INSR) in vertebrates. Molecular docking studies reveals unique interaction with the human insulin receptor. In vivo, insulin-like peptide injection reduces blood glucose levels in two models of zebrafish diabetes (streptozotocin- and glucose-induced). Also shorter swimming distance of zebrafish larvae, an effect which is not observed with human insulin. This is Insulin-like peptide 02 from Exaiptasia diaphana (Tropical sea anemone).